The primary structure comprises 443 residues: Ribulose bisphosphate carboxylase large chain (443 aa).

Positions 89 and 139 each coordinate substrate. The active-site Proton acceptor is the K141. Residue K143 participates in substrate binding. Mg(2+)-binding residues include K167, D169, and E170. K167 bears the N6-carboxylysine mark. Catalysis depends on H260, which acts as the Proton acceptor. Substrate is bound by residues R261, H293, and S345.

This sequence belongs to the RuBisCO large chain family. Type I subfamily. As to quaternary structure, heterohexadecamer of 8 large chains and 8 small chains; disulfide-linked. The disulfide link is formed within the large subunit homodimers. The cofactor is Mg(2+). In terms of processing, the disulfide bond which can form in the large chain dimeric partners within the hexadecamer appears to be associated with oxidative stress and protein turnover.

The protein resides in the plastid. It localises to the chloroplast. The catalysed reaction is 2 (2R)-3-phosphoglycerate + 2 H(+) = D-ribulose 1,5-bisphosphate + CO2 + H2O. It carries out the reaction D-ribulose 1,5-bisphosphate + O2 = 2-phosphoglycolate + (2R)-3-phosphoglycerate + 2 H(+). Its function is as follows. RuBisCO catalyzes two reactions: the carboxylation of D-ribulose 1,5-bisphosphate, the primary event in carbon dioxide fixation, as well as the oxidative fragmentation of the pentose substrate in the photorespiration process. Both reactions occur simultaneously and in competition at the same active site. This Callitriche heterophylla (Large water-starwort) protein is Ribulose bisphosphate carboxylase large chain.